Reading from the N-terminus, the 322-residue chain is tRNA uridine(34) hydroxylase (322 aa).

One can recognise a Rhodanese domain in the interval Q125–Q219. C179 functions as the Cysteine persulfide intermediate in the catalytic mechanism.

This sequence belongs to the TrhO family.

It carries out the reaction uridine(34) in tRNA + AH2 + O2 = 5-hydroxyuridine(34) in tRNA + A + H2O. Its function is as follows. Catalyzes oxygen-dependent 5-hydroxyuridine (ho5U) modification at position 34 in tRNAs. In Bacillus velezensis (strain DSM 23117 / BGSC 10A6 / LMG 26770 / FZB42) (Bacillus amyloliquefaciens subsp. plantarum), this protein is tRNA uridine(34) hydroxylase.